Here is a 125-residue protein sequence, read N- to C-terminus: Neuropeptide B (125 aa).

An N-terminal signal peptide occupies residues 1–24; that stretch reads MARSATLAAAALALCLLLAPPGLA. A disordered region spans residues 54–73; it reads RRSQPYRGAEPPGGAGASPE. Positions 56–125 are excised as a propeptide; sequence SQPYRGAEPP…SLRAADCLAA (70 aa).

Belongs to the neuropeptide B/W family. As to expression, widely expressed in the central nervous system. High levels are found in substantia nigra, hypothalamus, hippocampus, spinal cord, placenta and fetal brain; lower levels are found in testis, uterus and ovary. Also detected at high levels in colorectal adenocarcinoma.

It localises to the secreted. Functionally, may be involved in the regulation of feeding, neuroendocrine system, memory, learning and in the afferent pain pathway. This is Neuropeptide B (NPB) from Homo sapiens (Human).